We begin with the raw amino-acid sequence, 310 residues long: Protein-methionine-sulfoxide reductase catalytic subunit MsrP (310 aa).

A signal peptide (tat-type signal) is located at residues 1–45 (MRKTSSPRIAPSEITPRDLYHDRRRFMQAAAGAAAAALWPHWLSA). Mo-molybdopterin contacts are provided by residues Asn73, 76–77 (YE), Cys131, Thr166, Asn214, Arg219, and 230–232 (SAK).

The protein belongs to the MsrP family. Heterodimer of a catalytic subunit (MsrP) and a heme-binding subunit (MsrQ). It depends on Mo-molybdopterin as a cofactor. Post-translationally, predicted to be exported by the Tat system. The position of the signal peptide cleavage has not been experimentally proven.

The protein localises to the periplasm. It catalyses the reaction L-methionyl-[protein] + a quinone + H2O = L-methionyl-(S)-S-oxide-[protein] + a quinol. The catalysed reaction is L-methionyl-[protein] + a quinone + H2O = L-methionyl-(R)-S-oxide-[protein] + a quinol. In terms of biological role, part of the MsrPQ system that repairs oxidized periplasmic proteins containing methionine sulfoxide residues (Met-O), using respiratory chain electrons. Thus protects these proteins from oxidative-stress damage caused by reactive species of oxygen and chlorine generated by the host defense mechanisms. MsrPQ is essential for the maintenance of envelope integrity under bleach stress, rescuing a wide series of structurally unrelated periplasmic proteins from methionine oxidation. The catalytic subunit MsrP is non-stereospecific, being able to reduce both (R-) and (S-) diastereoisomers of methionine sulfoxide. This is Protein-methionine-sulfoxide reductase catalytic subunit MsrP from Methylococcus capsulatus (strain ATCC 33009 / NCIMB 11132 / Bath).